Here is a 1284-residue protein sequence, read N- to C-terminus: Neurexin-4 (1284 aa).

The signal sequence occupies residues 1 to 35 (MRPPRSNTKAAFSSLQFGLLCLLLLVNNGIKSVQA). Topologically, residues 36–1217 (DAFTDYFSDY…LRKAYNEVDS (1182 aa)) are extracellular. The 139-residue stretch at 47 to 185 (CNQPLMERAV…ISMRVELYGC (139 aa)) folds into the F5/8 type C domain. A disulfide bridge links Cys-47 with Cys-185. Asn-195, Asn-329, Asn-340, and Asn-398 each carry an N-linked (GlcNAc...) asparagine glycan. Residues 220-369 (FKTAFANGVM…FTRVNTIYAC (150 aa)) form the Laminin G-like 1 domain. The cysteines at positions 333 and 369 are disulfide-linked. The region spanning 403–540 (FRTYEETGVM…CGDDVVVDAC (138 aa)) is the Laminin G-like 2 domain. Cystine bridges form between Cys-507–Cys-540, Cys-546–Cys-557, Cys-551–Cys-566, and Cys-568–Cys-578. One can recognise an EGF-like 1 domain in the interval 542–579 (MIDRCNPNPCQHKGLCHQNSREFFCDCGHTGYAGAVCH). N-linked (GlcNAc...) asparagine glycosylation is present at Asn-668. One can recognise a Laminin G-like 3 domain in the interval 824–962 (FRTTQENSVI…RGLYGISTGC (139 aa)). Disulfide bonds link Cys-934/Cys-962, Cys-966/Cys-977, Cys-971/Cys-986, and Cys-988/Cys-998. The 38-residue stretch at 962-999 (CVGRCESNPCLNNGTCIERYDGYSCDCRWSAFKGPICA) folds into the EGF-like 2 domain. Residue Asn-974 is glycosylated (N-linked (GlcNAc...) asparagine). One can recognise a Laminin G-like 4 domain in the interval 1032-1183 (FTTTIPKGFL…LGTQLTEDFC (152 aa)). 2 N-linked (GlcNAc...) asparagine glycosylation sites follow: Asn-1047 and Asn-1137. Residues Cys-1147 and Cys-1183 are joined by a disulfide bond. Residues 1218-1238 (VLLACLLVILFLLLILMFFLI) form a helical membrane-spanning segment. The Cytoplasmic segment spans residues 1239–1284 (GRYLHRHKGDYLTHEDQGADGADDPDDAVLHSTTGHQVRKRTEIFI).

The protein belongs to the neurexin family. In terms of assembly, forms a complex with Nrg and Cont. Forms a complex composed of septa junction proteins Nrx-IV/Nrx, Tsf2/MTf, Cont and Nrg during late embryogenesis. The C-terminal region interacts with coracle. Interacts with Patj in cis form. As to expression, found in septate junctions of epithelial and glial cells.

The protein resides in the cell membrane. It is found in the cell junction. The protein localises to the septate junction. Its function is as follows. Seems to play a role in the formation and function of septate junctions. Septate junctions, which are the equivalent of vertebrates tight junctions, are characterized by regular arrays of transverse structures that span the intermembrane space and form a physical barrier to diffusion. Required for the blood-brain barrier formation. The polypeptide is Neurexin-4 (Nrx-IV) (Drosophila melanogaster (Fruit fly)).